A 507-amino-acid chain; its full sequence is Cytochrome P450 monooxygenase helB3 (507 aa).

The signal sequence occupies residues 1-25 (MAVATLISILFAVLALRLCYLLIHA). N-linked (GlcNAc...) asparagine glycosylation is found at Asn-111, Asn-206, and Asn-339. Cys-435 serves as a coordination point for heme.

Belongs to the cytochrome P450 family. Heme is required as a cofactor.

It participates in mycotoxin biosynthesis. Cytochrome P450 monooxygenase; part of the gene cluster that mediates the biosynthesis of helvolic acid, an antibacterial nortriterpenoid. Protostadienol synthase helA cyclizes (3S)-oxidosqualene to (17Z)-protosta-17(20),24-dien-3-beta-ol (protostadienol). The synthesis of protostadienol is followed by several steps of monooxygenation, dehydrogenation, and acyl transfer to yield the final helvolic acid. Following the cyclization to the tetracyclic protostadienol by helA, cytochrome P450 monooxygenases helB1-mediated and helB2-mediated oxidation at C-4 and C-16, acyltransferase helD2-dependent acetylation of 16-OH, oxidation of C-21 by cytochrome P450 monooxygenase helB4, and short chain dehydrogenase helC-dependent oxidative decarboxylation yield the fusidane skeleton. This intermediate is further modified in three additional steps mediated by the cytochrome P450 monooxygenase helB3, the acyltransferase helD1, and the 3-ketosteroid 1-dehydrogenase helE to give helvolic acid. Compared with the late stages in the biosynthesis of helvolic acid, enzymes involved in the early stage modifications act in a relatively strict order. The hydroxylation of C-16 by helB1 and subsequent acetylation by helD2 should occur before the helB3-mediated oxidation of C-21. C-4 demethylation in fusidane-type antibiotics proceeds in an unusual manner though it is also achieved by oxidative decarboxylation. The methyl group at C-4 beta position is oxidized by helB1 and subsequently removed by the short chain dehydrogenase helC. This Aspergillus fumigatus (strain ATCC MYA-4609 / CBS 101355 / FGSC A1100 / Af293) (Neosartorya fumigata) protein is Cytochrome P450 monooxygenase helB3.